Consider the following 332-residue polypeptide: MYIVVTGAAGFIGSNIVKALNERGITNIIAVDNLTKADKFKNLIDCDIVDYLDKNDFIERIQAGHFDGEIDAILHEGACSDTMETDGRYMMENNYRYSMILLDWCLDQDVQFLYASSAATYGSSGTFKEERQYEGPLNVYGYSKFLFDQIVRQRLAQNPSSQIVGFRYFNVYGPRETHKGRMASVAFHNFNQFRADGKVKLFEGSHGYPDGDQQRDFVFVGDVAKVNLFFLDHPEKSGIFNLGSGRAQSFNDVAVAAVNGCRKARSESALSLEELRAQGLLEYVAFPEALKGKYQAFTQADLGKLRAAGYDAPMATVEEGVSQYIEWLQRNV.

NADP(+)-binding positions include 11–12 (FI), 32–33 (DN), K39, K54, 76–80 (EGACS), and N93. Y140 serves as the catalytic Proton acceptor. NADP(+) is bound at residue K144. N170 provides a ligand contact to substrate. Residues V171 and K179 each coordinate NADP(+). K179 (proton acceptor) is an active-site residue. Residues R181, H188, 202–205 (FEGS), R215, and Y294 contribute to the substrate site.

This sequence belongs to the NAD(P)-dependent epimerase/dehydratase family. HldD subfamily. As to quaternary structure, homopentamer. It depends on NADP(+) as a cofactor.

The catalysed reaction is ADP-D-glycero-beta-D-manno-heptose = ADP-L-glycero-beta-D-manno-heptose. Its pathway is nucleotide-sugar biosynthesis; ADP-L-glycero-beta-D-manno-heptose biosynthesis; ADP-L-glycero-beta-D-manno-heptose from D-glycero-beta-D-manno-heptose 7-phosphate: step 4/4. In terms of biological role, catalyzes the interconversion between ADP-D-glycero-beta-D-manno-heptose and ADP-L-glycero-beta-D-manno-heptose via an epimerization at carbon 6 of the heptose. This chain is ADP-L-glycero-D-manno-heptose-6-epimerase, found in Dechloromonas aromatica (strain RCB).